A 689-amino-acid polypeptide reads, in one-letter code: Transcription factor MYC2 (689 aa).

The JAZ-interaction domain stretch occupies residues 94–172 (LQQRLQALID…VLRELNSLIS (79 aa)). The span at 316 to 349 (NTVQTNSVPSSNSNKQIAYGNENNHPSGNGQSCY) shows a compositional bias: polar residues. Disordered regions lie at residues 316 to 361 (NTVQ…PQQQ) and 420 to 519 (QSQF…EAER). The span at 350–361 (NQQQQKNPPQQQ) shows a compositional bias: low complexity. A compositionally biased stretch (basic and acidic residues) spans 471 to 495 (DSEHSDLEASVVKEADSSRVVEPEK). Positions 496 to 505 (RPRKRGRKPA) are enriched in basic residues. Residues 506-519 (NGREEPLNHVEAER) show a composition bias toward basic and acidic residues. The segment at 509–522 (EEPLNHVEAERQRR) is basic motif; degenerate. Positions 509 to 558 (EEPLNHVEAERQRREKLNQRFYALRAVVPNVSKMDKASLLGDAISYINEL) constitute a bHLH domain. The interval 523–558 (EKLNQRFYALRAVVPNVSKMDKASLLGDAISYINEL) is helix-loop-helix motif. The interval 563-602 (QNTESDKEDLKSQIEDLKKESRRPGPPPPPNQDLKMSSHT) is disordered. Residues 566–585 (ESDKEDLKSQIEDLKKESRR) are compositionally biased toward basic and acidic residues.

In terms of assembly, interacts (via N-terminus) with MED25. Interacts (via N-terminus) with JAZ7. MED25 and JAZ7 compete with each other to bind to MYC2. Interacts (via N-terminus) with MTB1. MTB1 and MED25 compete with each other to bind to MYC2. Expressed at low levels in roots, stems, leaves, flowers and fruits.

It is found in the nucleus. Transcriptional activator that binds to the G-box motif (5'-AACGTG-3') found in the promoter of the jasmonate-induced gene LAPA1. Acts as a negative regulator of blue light-mediated photomorphogenesis and positively regulates root growth. Promotes growth in response to the phytohormones abscisic acid (ABA) and jasmonate (JA). Binds to the G-box motif (5'-CACGTG-3') of the RBCS-3A gene promoter. Acts downstream of the jasmonate (JA) receptor to orchestrate JA-mediated activation of plant responses. Positively regulates both wound-responsive and pathogen-responsive genes through MYC2-targeted transcription factors (MTFs) involved in early response to JA. With JA2L forms a transcription module that regulates wounding-responsive genes. With ERF.C3 forms a transcription module that regulates pathogen-responsive genes. Plays a critical role in orchestrating JA-mediated defense gene expression during Botrytis cinerea infection. Negatively regulates defense responses to root-knot nematodes, potentially by mediating crosstalk among the hormones strigolactones, abscisic acid (ABA) and jasmonate (JA). Regulates the termination of JA-mediated defense responses by specifically binding the G-box (5'-CACATG-3') motifs in the promoters of MTB1, MTB2 and MTB3, which are transcription factors that negatively regulates JA signaling. May be involved in JA-induced chilling tolerance, possibly by ameliorating the antioxidant enzyme system of fruit and increasing proline and lycopene levels. The chain is Transcription factor MYC2 from Solanum lycopersicum (Tomato).